Consider the following 298-residue polypeptide: MANLMNEFPDIEIKQDEPLMNYTYTKTGGPADWLAFPETIDQVKELVDYVREHEMGLTVLGNASNLIVGDGGIDDLTIILTRLNKIEVHDNKVTAQAGASYIATTEAARDSELTGLEFAAGIPGSIGGAVFMNAGAYGGETKNVVSEATVMLPDGTIKHLTNEELDFGYRHSSIQDNNGVVLDATFALEPGKYDEIKARMDDLNERREAKQPLDLPSCGSVFKRPEGYYAGKLIHDAGLQGYTSGGAQVSTKHAGFIVNIDHGTAADYVNVIHHVQKTVKEKFGVDLETEVRIIGRQD.

The FAD-binding PCMH-type domain occupies lysine 26–glycine 191. Arginine 170 is an active-site residue. Serine 220 (proton donor) is an active-site residue. Glutamate 290 is an active-site residue.

It belongs to the MurB family. Requires FAD as cofactor.

The protein localises to the cytoplasm. It catalyses the reaction UDP-N-acetyl-alpha-D-muramate + NADP(+) = UDP-N-acetyl-3-O-(1-carboxyvinyl)-alpha-D-glucosamine + NADPH + H(+). Its pathway is cell wall biogenesis; peptidoglycan biosynthesis. Its function is as follows. Cell wall formation. This is UDP-N-acetylenolpyruvoylglucosamine reductase from Limosilactobacillus reuteri subsp. reuteri (strain JCM 1112) (Lactobacillus reuteri).